Here is a 327-residue protein sequence, read N- to C-terminus: DNA primase large subunit PriL (327 aa).

The [4Fe-4S] cluster site is built by cysteine 218, cysteine 290, cysteine 299, and cysteine 307.

It belongs to the eukaryotic-type primase large subunit family. In terms of assembly, heterodimer of a small subunit (PriS) and a large subunit (PriL). The cofactor is [4Fe-4S] cluster.

In terms of biological role, regulatory subunit of DNA primase, an RNA polymerase that catalyzes the synthesis of short RNA molecules used as primers for DNA polymerase during DNA replication. Stabilizes and modulates the activity of the small subunit, increasing the rate of DNA synthesis, and conferring RNA synthesis capability. The DNA polymerase activity may enable DNA primase to also catalyze primer extension after primer synthesis. May also play a role in DNA repair. This is DNA primase large subunit PriL from Thermoplasma volcanium (strain ATCC 51530 / DSM 4299 / JCM 9571 / NBRC 15438 / GSS1).